Here is a 125-residue protein sequence, read N- to C-terminus: Succinate dehydrogenase hydrophobic membrane anchor subunit (125 aa).

Residues 1 to 24 (MTYDFRAEIVKAKNTGSAKSGSHH) are Cytoplasmic-facing. The helical transmembrane segment at 25 to 45 (WLLQRITAIILVLCSLWLLYF) threads the bilayer. Residues 46–67 (TLANKNSDVNIIIWELKRPINL) are Periplasmic-facing. Residues 68-89 (IPLLIAVITSLYHAMLGMQVVI) traverse the membrane as a helical segment. H80 contacts heme. Residues 90 to 99 (EDYISCNKLR) are Cytoplasmic-facing. Y92 contributes to the a ubiquinone binding site. The chain crosses the membrane as a helical span at residues 100 to 123 (NTLIIAVKLFSILTIVAFIVAVFY).

As to quaternary structure, part of an enzyme complex containing four subunits: a flavoprotein, an iron-sulfur protein, plus two membrane-anchoring proteins, SdhC and SdhD. Requires heme as cofactor.

Its subcellular location is the cell inner membrane. It functions in the pathway carbohydrate metabolism; tricarboxylic acid cycle. Its function is as follows. Membrane-anchoring subunit of succinate dehydrogenase (SDH). The chain is Succinate dehydrogenase hydrophobic membrane anchor subunit (sdhD) from Rickettsia bellii (strain RML369-C).